The chain runs to 523 residues: Sporulation protein 23 (523 aa).

In terms of assembly, interacts with SPO1 in meiosis.

Functionally, regulates expression of PIS1. This chain is Sporulation protein 23 (SPO23), found in Saccharomyces cerevisiae (strain ATCC 204508 / S288c) (Baker's yeast).